A 317-amino-acid polypeptide reads, in one-letter code: MSFSAETKDELARIEEGKRCCNLAELAALVRMDGTLQIANHSYALNVITESAPVARKVYRLAKNLLGLPVDIMVRRKLRLKKNNSYMVKIYPRTLEDLQQLGLLDEEGEILPGIPNVLVKKKCDRIAYLRGAFLAGGSINNPEGTYHLEIITNDSLHAEALSKLLNKFHLGAKVSMRKSWHVVYIKESEHIVEFLGFIGAHRALLEFENVRVLKDMRNQVNRLVNCETANLNKTVDAAVRQVENIQRVANTIGLQALPEPLREIAELRLEYPDASLKELGEMLVPKVGKSGVNHRMRKIDELAEKLEEQSKRVRKGG.

Positions 275–308 (SLKELGEMLVPKVGKSGVNHRMRKIDELAEKLEE) form a DNA-binding region, H-T-H motif.

It belongs to the WhiA family.

Its function is as follows. Involved in cell division and chromosome segregation. The sequence is that of Probable cell division protein WhiA from Desulfitobacterium hafniense (strain Y51).